The primary structure comprises 476 residues: PTS system N-acetylmuramic acid-specific EIIBC component (476 aa).

The region spanning Met1 to Ser89 is the PTS EIIB type-1 domain. Cys28 serves as the catalytic Phosphocysteine intermediate; for EIIB activity. The PTS EIIC type-1 domain maps to Ala116–Ser476. Helical transmembrane passes span Phe118–Leu138, Leu160–Gly180, Ala186–Asn206, Phe220–Val240, Thr265–Phe285, Val304–Val324, Leu337–Phe357, Gly371–Pro391, Phe396–Leu416, and Val443–Ile463.

The protein localises to the cell inner membrane. The catalysed reaction is N-acetyl-beta-D-muramate(out) + N(pros)-phospho-L-histidyl-[protein] = N-acetyl-beta-D-muramate 6-phosphate(in) + L-histidyl-[protein]. Functionally, the phosphoenolpyruvate-dependent sugar phosphotransferase system (sugar PTS), a major carbohydrate active transport system, catalyzes the phosphorylation of incoming sugar substrates concomitantly with their translocation across the cell membrane. This system is involved in N-acetylmuramic acid (MurNAc) transport, yielding cytoplasmic MurNAc-6-P. Is also able to take up anhydro-N-acetylmuramic acid (anhMurNAc), but cannot phosphorylate the carbon 6, probably because of the 1,6-anhydro ring. The polypeptide is PTS system N-acetylmuramic acid-specific EIIBC component (murP) (Pasteurella multocida (strain Pm70)).